A 788-amino-acid polypeptide reads, in one-letter code: Autophagy-related protein 9 (788 aa).

Over 1-171 (MTDKSTFLSV…EAYMYYTGKG (171 aa)) the chain is Cytoplasmic. Positions 32 to 42 (ILRRVEEEHAQ) are enriched in basic and acidic residues. The disordered stretch occupies residues 32–127 (ILRRVEEEHA…TGVANGGLPR (96 aa)). The segment covering 44 to 58 (SDNSNSDNDSGNDSD) has biased composition (low complexity). Over residues 101-112 (SFAQGTKTQTPI) the composition is skewed to polar residues. Residues 172–192 (LVSIILSRVLNMSTIMFVVVF) traverse the membrane as a helical segment. Over 193-222 (STYLGSCIDYSKIKGSRTLDEVHVKQCYAK) the chain is Lumenal. Residues 223 to 243 (LGSFHVFVLWTFFVLWFMKLF) form a helical membrane-spanning segment. Residues 244–390 (QYVKDIRRLV…QILSTGLRRR (147 aa)) lie on the Cytoplasmic side of the membrane. An intramembrane region is located at residue phenylalanine 391. Residues 392-479 (VFAAIMNVVF…PKEKTALVSK (88 aa)) are Cytoplasmic-facing. A helical membrane pass occupies residues 480–500 (FVSFIAGSFAAVLGIASLIDP). Residues 501–512 (ELFLMFEISANR) lie on the Lumenal side of the membrane. A helical membrane pass occupies residues 513–533 (TVLFYIGVFGSILAVSRSLIP). Residues 534 to 579 (EETLVFDPEISLRYVAEFTHYLPPEWEGKLHTEQVKNEFSLMYEMR) lie on the Cytoplasmic side of the membrane. An intramembrane segment occupies 580-600 (LIILLKELASIFLAPFILYYS). The Cytoplasmic portion of the chain corresponds to 601-788 (LTQSCDDIVD…KKTDNMNLGA (188 aa)). The disordered stretch occupies residues 715–736 (LSPAAPTATTATSGTATGAAPR). Low complexity predominate over residues 716–734 (SPAAPTATTATSGTATGAA).

It belongs to the ATG9 family. As to quaternary structure, homotrimer; forms a homotrimer with a central pore that forms a path between the two membrane leaflets. Phosphorylated by ATG1. ATG1 phosphorylation is required for preautophagosome elongation.

Its subcellular location is the preautophagosomal structure membrane. It localises to the cytoplasmic vesicle membrane. The protein resides in the golgi apparatus membrane. It is found in the endoplasmic reticulum membrane. It carries out the reaction a 1,2-diacyl-sn-glycero-3-phosphocholine(in) = a 1,2-diacyl-sn-glycero-3-phosphocholine(out). The enzyme catalyses a 1,2-diacyl-sn-glycero-3-phospho-L-serine(in) = a 1,2-diacyl-sn-glycero-3-phospho-L-serine(out). It catalyses the reaction a 1,2-diacyl-sn-glycero-3-phosphoethanolamine(in) = a 1,2-diacyl-sn-glycero-3-phosphoethanolamine(out). The catalysed reaction is a 1,2-diacyl-sn-glycero-3-phospho-(1D-myo-inositol-3-phosphate)(in) = a 1,2-diacyl-sn-glycero-3-phospho-(1D-myo-inositol-3-phosphate)(out). Phospholipid scramblase involved in autophagy and cytoplasm to vacuole transport (Cvt) vesicle formation. Cycles between the preautophagosomal structure/phagophore assembly site (PAS) and the cytoplasmic vesicle pool and supplies membrane for the growing autophagosome. Lipid scramblase activity plays a key role in preautophagosomal structure/phagophore assembly by distributing the phospholipids that arrive through ATG2 from the cytoplasmic to the luminal leaflet of the bilayer, thereby driving autophagosomal membrane expansion. Required for mitophagy. Also involved in endoplasmic reticulum-specific autophagic process and is essential for the survival of cells subjected to severe ER stress. Different machineries are required for anterograde trafficking to the PAS during either the Cvt pathway or bulk autophagy and for retrograde trafficking. This chain is Autophagy-related protein 9, found in Yarrowia lipolytica (strain CLIB 122 / E 150) (Yeast).